The primary structure comprises 50 residues: Insulin (50 aa).

3 disulfide bridges follow: Cys-7-Cys-36, Cys-19-Cys-49, and Cys-35-Cys-40.

The protein belongs to the insulin family. Heterodimer of a B chain and an A chain linked by two disulfide bonds.

The protein localises to the secreted. In terms of biological role, insulin decreases blood glucose concentration. It increases cell permeability to monosaccharides, amino acids and fatty acids. It accelerates glycolysis, the pentose phosphate cycle, and glycogen synthesis in liver. The chain is Insulin (ins) from Myoxocephalus scorpius (Shorthorn sculpin).